An 84-amino-acid polypeptide reads, in one-letter code: Putative glutaredoxin MT3292 (84 aa).

One can recognise a Glutaredoxin domain in the interval 1–84 (MITAALTIYT…VKAKLVKIAG (84 aa)).

The chain is Putative glutaredoxin MT3292 from Mycobacterium tuberculosis (strain CDC 1551 / Oshkosh).